A 113-amino-acid chain; its full sequence is Nucleoid-associated protein Cthe_2143 (113 aa).

The protein belongs to the YbaB/EbfC family. As to quaternary structure, homodimer.

The protein localises to the cytoplasm. Its subcellular location is the nucleoid. In terms of biological role, binds to DNA and alters its conformation. May be involved in regulation of gene expression, nucleoid organization and DNA protection. This chain is Nucleoid-associated protein Cthe_2143, found in Acetivibrio thermocellus (strain ATCC 27405 / DSM 1237 / JCM 9322 / NBRC 103400 / NCIMB 10682 / NRRL B-4536 / VPI 7372) (Clostridium thermocellum).